Reading from the N-terminus, the 574-residue chain is Membrane protein insertase YidC (574 aa).

6 consecutive transmembrane segments (helical) span residues 6–26 (VFLI…WGKD), 356–376 (FSIM…LHSF), 380–400 (WGWA…PLSA), 447–467 (GGCL…WVLV), 489–509 (PYFI…KLTP), and 525–545 (PLVF…YWVV).

This sequence belongs to the OXA1/ALB3/YidC family. Type 1 subfamily. Interacts with the Sec translocase complex via SecD. Specifically interacts with transmembrane segments of nascent integral membrane proteins during membrane integration.

It localises to the cell inner membrane. In terms of biological role, required for the insertion and/or proper folding and/or complex formation of integral membrane proteins into the membrane. Involved in integration of membrane proteins that insert both dependently and independently of the Sec translocase complex, as well as at least some lipoproteins. Aids folding of multispanning membrane proteins. This chain is Membrane protein insertase YidC, found in Xanthomonas axonopodis pv. citri (strain 306).